The following is a 310-amino-acid chain: Upstream stimulatory factor 1 (310 aa).

A compositionally biased stretch (polar residues) spans 1–17; the sequence is MKGQQKTAETEEGTVQI. 2 disordered regions span residues 1–26 and 171–209; these read MKGQQKTAETEEGTVQIQEGAVATGE and QGGSQRSIAPRTHPYSPKSAAPRTTRDEKRRAQHNEVER. The segment covering 194-209 has biased composition (basic and acidic residues); that stretch reads TTRDEKRRAQHNEVER. The bHLH domain maps to 199–254; the sequence is KRRAQHNEVERRRRDKINNWIVQLSKIIPDCSMESTKSGQSKGGILSKACDYIQEL. A leucine-zipper region spans residues 271 to 292; that stretch reads LQLDNDVLRQQVEDLKNKNLLL. Residue Lys-306 forms a Glycyl lysine isopeptide (Lys-Gly) (interchain with G-Cter in SUMO2) linkage.

As to quaternary structure, efficient DNA binding requires dimerization with another bHLH protein. Binds DNA as a homodimer or a heterodimer (USF1/USF2).

The protein localises to the nucleus. Its function is as follows. Transcription factor that binds to a symmetrical DNA sequence (E-boxes) (5'-CACGTG-3') that is found in a variety of viral and cellular promoters. Regulates the expression of the surfactant protein-A (SP-A) gene. This Oryctolagus cuniculus (Rabbit) protein is Upstream stimulatory factor 1 (USF1).